The primary structure comprises 329 residues: GTPase Obg (329 aa).

In terms of domain architecture, Obg spans 1–159; that stretch reads MQFIDEAKIF…MWVWLHLKLL (159 aa). The region spanning 160-327 is the OBG-type G domain; it reads SDVGLVGLPN…LLANILSELQ (168 aa). Residues 166–173, 191–195, 212–215, 279–282, and 308–310 contribute to the GTP site; these read GLPNAGKS, FTTLT, DIPG, TKTD, and SSY. 2 residues coordinate Mg(2+): serine 173 and threonine 193.

The protein belongs to the TRAFAC class OBG-HflX-like GTPase superfamily. OBG GTPase family. As to quaternary structure, monomer. It depends on Mg(2+) as a cofactor.

The protein localises to the cytoplasm. Its function is as follows. An essential GTPase which binds GTP, GDP and possibly (p)ppGpp with moderate affinity, with high nucleotide exchange rates and a fairly low GTP hydrolysis rate. Plays a role in control of the cell cycle, stress response, ribosome biogenesis and in those bacteria that undergo differentiation, in morphogenesis control. This Orientia tsutsugamushi (strain Boryong) (Rickettsia tsutsugamushi) protein is GTPase Obg.